Here is a 351-residue protein sequence, read N- to C-terminus: UDP-3-O-acylglucosamine N-acyltransferase (351 aa).

The active-site Proton acceptor is the H257.

This sequence belongs to the transferase hexapeptide repeat family. LpxD subfamily. In terms of assembly, homotrimer.

The enzyme catalyses a UDP-3-O-[(3R)-3-hydroxyacyl]-alpha-D-glucosamine + a (3R)-hydroxyacyl-[ACP] = a UDP-2-N,3-O-bis[(3R)-3-hydroxyacyl]-alpha-D-glucosamine + holo-[ACP] + H(+). The protein operates within bacterial outer membrane biogenesis; LPS lipid A biosynthesis. Catalyzes the N-acylation of UDP-3-O-acylglucosamine using 3-hydroxyacyl-ACP as the acyl donor. Is involved in the biosynthesis of lipid A, a phosphorylated glycolipid that anchors the lipopolysaccharide to the outer membrane of the cell. The chain is UDP-3-O-acylglucosamine N-acyltransferase from Methylorubrum extorquens (strain PA1) (Methylobacterium extorquens).